Reading from the N-terminus, the 290-residue chain is Ribosomal RNA small subunit methyltransferase A (290 aa).

S-adenosyl-L-methionine-binding residues include asparagine 27, leucine 29, glycine 54, glutamate 75, aspartate 100, and asparagine 125.

It belongs to the class I-like SAM-binding methyltransferase superfamily. rRNA adenine N(6)-methyltransferase family. RsmA subfamily.

It localises to the cytoplasm. It catalyses the reaction adenosine(1518)/adenosine(1519) in 16S rRNA + 4 S-adenosyl-L-methionine = N(6)-dimethyladenosine(1518)/N(6)-dimethyladenosine(1519) in 16S rRNA + 4 S-adenosyl-L-homocysteine + 4 H(+). Functionally, specifically dimethylates two adjacent adenosines (A1518 and A1519) in the loop of a conserved hairpin near the 3'-end of 16S rRNA in the 30S particle. May play a critical role in biogenesis of 30S subunits. In Streptococcus thermophilus (strain CNRZ 1066), this protein is Ribosomal RNA small subunit methyltransferase A.